The sequence spans 92 residues: Cell division protein FtsB (92 aa).

Residues 1-3 (MKW) are Cytoplasmic-facing. The chain crosses the membrane as a helical span at residues 4-21 (VTVVLSFALVCCQYSLWF). The Periplasmic segment spans residues 22 to 92 (GKGSIGRNSS…TFYRLIRHNR (71 aa)). The stretch at 28 to 50 (RNSSLREQIAVQEEKNQTLALRN) forms a coiled coil.

Belongs to the FtsB family. Part of a complex composed of FtsB, FtsL and FtsQ.

It is found in the cell inner membrane. Functionally, essential cell division protein. May link together the upstream cell division proteins, which are predominantly cytoplasmic, with the downstream cell division proteins, which are predominantly periplasmic. The polypeptide is Cell division protein FtsB (Neisseria meningitidis serogroup C (strain 053442)).